Consider the following 1183-residue polypeptide: LRR receptor-like serine/threonine-protein kinase FLS2 (1183 aa).

The first 41 residues, 1-41 (MERNKFASKMSQHYTKTICIAVVLVAVLFSLSSAAAAGSGA), serve as a signal peptide directing secretion. Over 42–809 (AVSVQLEALL…GKKRVFSRTG (768 aa)) the chain is Extracellular. A disulfide bridge links Cys-87 with Cys-94. N-linked (GlcNAc...) asparagine glycosylation is found at Asn-88 and Asn-120. LRR repeat units follow at residues 97 to 120 (AGQV…FLGN), 121 to 145 (ISTL…LGRL), 147 to 169 (ELEQ…LCNC), 171 to 193 (AMWA…IGDL), 194 to 217 (SNLE…MAKL), 218 to 241 (KGIM…IGDL), 242 to 265 (SNLQ…LGRC), 267 to 289 (NLTL…LGEL), 290 to 313 (TNLE…LRRC), 315 to 337 (SLLN…LGEL), 338 to 361 (PSLQ…LTNL), 363 to 385 (NLTI…IGSL), and 386 to 409 (RNLR…ISNC). Cys-167 and Cys-189 form a disulfide bridge. N-linked (GlcNAc...) asparagine glycans are attached at residues Asn-168 and Asn-181. N-linked (GlcNAc...) asparagine glycosylation is present at Asn-267. N-linked (GlcNAc...) asparagine glycosylation is found at Asn-363, Asn-395, Asn-408, and Asn-414. LRR repeat units lie at residues 433–457 (LQSL…LFDC), 459–480 (QLQK…LVGQ), 481–505 (LGNL…IGNM), 507–529 (KLIS…ISNM), 530–553 (SSLQ…VFEL), 555–577 (QLTI…VANL), 578–600 (RSLS…ALGR), 601–625 (LDQL…VIAS), 627–651 (SNVQ…IGGL), 652–675 (VMVQ…LAGC), 676–699 (KNLY…LFPQ), 701–724 (DLLT…IAAL), 725–748 (KHIQ…LANL), and 749–773 (TALR…VFRN). Asn-483, Asn-504, and Asn-528 each carry an N-linked (GlcNAc...) asparagine glycan. An N-linked (GlcNAc...) asparagine glycan is attached at Asn-591. An N-linked (GlcNAc...) asparagine glycan is attached at Asn-634. N-linked (GlcNAc...) asparagine glycans are attached at residues Asn-707, Asn-747, Asn-755, and Asn-773. The chain crosses the membrane as a helical span at residues 810–830 (LVILVVLIALSTLLLLMVATI). Residues 831–1183 (LLVSYRRYRR…LKMSKLVGED (353 aa)) lie on the Cytoplasmic side of the membrane. The Protein kinase domain occupies 876–1179 (FDQGNVIGSS…LSSLLKMSKL (304 aa)). ATP contacts are provided by residues 882 to 890 (IGSSNLSTV) and Lys-908. Residue Asp-1013 is the Proton acceptor of the active site.

It belongs to the protein kinase superfamily. Ser/Thr protein kinase family. In terms of assembly, interacts with SERK2.

The protein resides in the cell membrane. The enzyme catalyses L-seryl-[protein] + ATP = O-phospho-L-seryl-[protein] + ADP + H(+). The catalysed reaction is L-threonyl-[protein] + ATP = O-phospho-L-threonyl-[protein] + ADP + H(+). Constitutes the pattern-recognition receptor (PPR) that determines the specific perception of flagellin (flg22), a potent elicitor of the defense response to pathogen-associated molecular patterns (PAMPs). Recognizes flg22 from Pseudomonas aeruginosa and Acidovorax avenae. flg22 is a peptide derived from the bacterial flagellin N-terminus sequence. Does not recognize flg22 from Xanthomonas oryzae pv. oryzae (Xoo) or Xanthomonas oryzae pv. oryzicola (Xoc). This Oryza sativa subsp. japonica (Rice) protein is LRR receptor-like serine/threonine-protein kinase FLS2.